Reading from the N-terminus, the 388-residue chain is Alanine racemase (388 aa).

Residue Lys-44 is the Proton acceptor; specific for D-alanine of the active site. Residue Lys-44 is modified to N6-(pyridoxal phosphate)lysine. Arg-142 serves as a coordination point for substrate. Catalysis depends on Tyr-273, which acts as the Proton acceptor; specific for L-alanine. Met-321 is a binding site for substrate.

It belongs to the alanine racemase family. The cofactor is pyridoxal 5'-phosphate.

The catalysed reaction is L-alanine = D-alanine. Its pathway is amino-acid biosynthesis; D-alanine biosynthesis; D-alanine from L-alanine: step 1/1. Functionally, catalyzes the interconversion of L-alanine and D-alanine. May also act on other amino acids. This chain is Alanine racemase (alr), found in Mycobacterium ulcerans (strain Agy99).